A 66-amino-acid chain; its full sequence is MSYARGEKIDGVIFLVEETDDGYTARALGHSIFTQAGSLEELKEMVKDAVECHFEEGERPKLSDFT.

The protein belongs to the UPF0150 family.

This chain is UPF0150 protein AF_0072.1, found in Archaeoglobus fulgidus (strain ATCC 49558 / DSM 4304 / JCM 9628 / NBRC 100126 / VC-16).